A 37-amino-acid polypeptide reads, in one-letter code: Large ribosomal subunit protein bL36c (37 aa).

This sequence belongs to the bacterial ribosomal protein bL36 family.

It localises to the plastid. The sequence is that of Large ribosomal subunit protein bL36c from Cuscuta gronovii (Common dodder).